The chain runs to 138 residues: Basic phospholipase A2 homolog Ts-K49a (138 aa).

An N-terminal signal peptide occupies residues 1-16 (MRTLWIMAVLLLGVEG). 7 cysteine pairs are disulfide-bonded: C42–C131, C44–C60, C59–C111, C65–C138, C66–C104, C73–C97, and C91–C102. Positions 121-133 (KKKKINLKLFCKK) are important for membrane-damaging activities in eukaryotes and bacteria; heparin-binding.

As to expression, expressed by the venom gland.

Its subcellular location is the secreted. Functionally, snake venom phospholipase A2 homolog that lacks catalytic activity. It shows myotoxic and weak anticoagulant activities and induces local edema a few hours after injection (5-10 ug) in the hind paw. A model of myotoxic mechanism has been proposed: an apo Lys49-PLA2 is activated by the entrance of a hydrophobic molecule (e.g. fatty acid) at the hydrophobic channel of the protein leading to a reorientation of a monomer. This reorientation causes a transition between 'inactive' to 'active' states, causing alignment of C-terminal and membrane-docking sites (MDoS) side-by-side and putting the membrane-disruption sites (MDiS) in the same plane, exposed to solvent and in a symmetric position for both monomers. The MDoS region stabilizes the toxin on membrane by the interaction of charged residues with phospholipid head groups. Subsequently, the MDiS region destabilizes the membrane with penetration of hydrophobic residues. This insertion causes a disorganization of the membrane, allowing an uncontrolled influx of ions (i.e. calcium and sodium), and eventually triggering irreversible intracellular alterations and cell death. This chain is Basic phospholipase A2 homolog Ts-K49a, found in Trimeresurus stejnegeri (Chinese green tree viper).